A 211-amino-acid chain; its full sequence is Peptide methionine sulfoxide reductase MsrA (211 aa).

Cys52 is an active-site residue.

The protein belongs to the MsrA Met sulfoxide reductase family.

It catalyses the reaction L-methionyl-[protein] + [thioredoxin]-disulfide + H2O = L-methionyl-(S)-S-oxide-[protein] + [thioredoxin]-dithiol. The enzyme catalyses [thioredoxin]-disulfide + L-methionine + H2O = L-methionine (S)-S-oxide + [thioredoxin]-dithiol. Functionally, has an important function as a repair enzyme for proteins that have been inactivated by oxidation. Catalyzes the reversible oxidation-reduction of methionine sulfoxide in proteins to methionine. The chain is Peptide methionine sulfoxide reductase MsrA from Klebsiella pneumoniae (strain 342).